Consider the following 200-residue polypeptide: Small ribosomal subunit protein uS4 (200 aa).

In terms of domain architecture, S4 RNA-binding spans 92–155 (SRLDAVVYSL…QNLDIIKESV (64 aa)).

It belongs to the universal ribosomal protein uS4 family. Part of the 30S ribosomal subunit. Contacts protein S5. The interaction surface between S4 and S5 is involved in control of translational fidelity.

Its function is as follows. One of the primary rRNA binding proteins, it binds directly to 16S rRNA where it nucleates assembly of the body of the 30S subunit. In terms of biological role, with S5 and S12 plays an important role in translational accuracy. The chain is Small ribosomal subunit protein uS4 from Staphylococcus epidermidis (strain ATCC 35984 / DSM 28319 / BCRC 17069 / CCUG 31568 / BM 3577 / RP62A).